The sequence spans 542 residues: Glucose-6-phosphate isomerase (542 aa).

The active-site Proton donor is the Glu353. Residues His384 and Lys508 contribute to the active site.

The protein belongs to the GPI family.

It is found in the cytoplasm. It catalyses the reaction alpha-D-glucose 6-phosphate = beta-D-fructose 6-phosphate. Its pathway is carbohydrate biosynthesis; gluconeogenesis. It functions in the pathway carbohydrate degradation; glycolysis; D-glyceraldehyde 3-phosphate and glycerone phosphate from D-glucose: step 2/4. Its function is as follows. Catalyzes the reversible isomerization of glucose-6-phosphate to fructose-6-phosphate. The sequence is that of Glucose-6-phosphate isomerase from Corynebacterium efficiens (strain DSM 44549 / YS-314 / AJ 12310 / JCM 11189 / NBRC 100395).